The following is a 350-amino-acid chain: Opsin, longwave 563 nm (350 aa).

Over 1–45 the chain is Extracellular; the sequence is HRLAGRHPQDNYEDSTQSSIFTYTNSNSTRGPFEGPNYHIAPRWV. Asn27 is a glycosylation site (N-linked (GlcNAc...) asparagine). The helical transmembrane segment at 46 to 70 threads the bilayer; it reads YHLTSVWMLFVVVASVFTNGLVLAA. At 71–82 the chain is on the cytoplasmic side; sequence TMKFKKLRHPLN. Residues 83–108 traverse the membrane as a helical segment; the sequence is WILVNLAIADLAETVIASTISVVNQV. At 109–122 the chain is on the extracellular side; that stretch reads HGYFVLGHPMCVLE. An intrachain disulfide couples Cys119 to Cys196. Residues 123–142 form a helical membrane-spanning segment; that stretch reads GYTVSLCGITGLWSLAIISW. Residues 143–161 are Cytoplasmic-facing; the sequence is ERWLVVCKPFGNVRFDAKL. A helical membrane pass occupies residues 162-185; that stretch reads AIVGVAFSWIWSAVWTAPPIFGWS. Over 186-211 the chain is Extracellular; that stretch reads RYWPHGLKTSCGPDVFSGSSYPGVQS. A helical transmembrane segment spans residues 212–239; the sequence is YMIVLMITCCFLPLGIIVLCYLQVWLAI. At 240 to 261 the chain is on the cytoplasmic side; that stretch reads RAVAKQQKESESTQKAEKEVTR. The helical transmembrane segment at 262–285 threads the bilayer; sequence MVVVMIVAYCVCWGPYTFFACFAA. The Extracellular segment spans residues 286–293; it reads ANPGYAFH. The chain crosses the membrane as a helical span at residues 294 to 318; it reads PLMAALPAYFAKSATIYNPIIYVFM. N6-(retinylidene)lysine is present on Lys305. Over 319–350 the chain is Cytoplasmic; sequence NRQFRNCILQLFGKKVDDGSELSSASKTEVSS.

This sequence belongs to the G-protein coupled receptor 1 family. Opsin subfamily. In terms of processing, phosphorylated on some or all of the serine and threonine residues present in the C-terminal region. The color pigments are found in the cone photoreceptor cells.

The protein resides in the membrane. Its function is as follows. Visual pigments are the light-absorbing molecules that mediate vision. They consist of an apoprotein, opsin, covalently linked to cis-retinal. The polypeptide is Opsin, longwave 563 nm (Callithrix jacchus (White-tufted-ear marmoset)).